The primary structure comprises 609 residues: MGKVIGIDLGTTNSCVSILEGDEPKVIQNPEGARTTPSVVAFKNGETQVGEVAKRQAITNPNTVQSIKRHMGTDYKVDIEGKSYTPQELSAMILQNLKSTAENYLGDTVDKAVITVPAYFNDGERQATKDAGKIAGLEVERIINEPTAAALAYGLDKTETDQKVLVFDLGGGTFDVSILELGDGVFEVLSTAGDNKLGGDDFDQVIIDYLVSEFKKENGVDLSQDKMALQRLKDAAEKAKKDLSGVSQTQISLPFISAGENGPLHLEISLTRSKFEELADSLIKKTMEPTRQALKDAGLSTSEIDEVILVGGSTRIPAVQEAVKKEIGKEPHKGVNPDEVVAMGAAIQAGVITGDVKDVVLLDVTPLSLGIEIMGGRMNTLIERNTTIPTSKSQVYSTAADNQPAVDIHVLQGERPMASDNKTLGRFQLTDIPPAPRGVPQIEVTFDIDKNGIVNVTAKDLGTNKEQNITIQSSSSLSDEEIDRMVKDAEENAEADKKRREEVDLRNEADSLVFQVEKTVKDLGENISDEDKKNAEEKKDALKTALEGEDIDDIKAKKEELEKVIQELSAKVYEQAQQAQQQGQEEQGSQDSTVEDADFKEVKDDEDKK.

Phosphothreonine; by autocatalysis is present on threonine 173. A compositionally biased stretch (basic and acidic residues) spans 525–542 (ENISDEDKKNAEEKKDAL). Disordered regions lie at residues 525 to 554 (ENISDEDKKNAEEKKDALKTALEGEDIDDI) and 574 to 609 (EQAQQAQQQGQEEQGSQDSTVEDADFKEVKDDEDKK). The span at 574–587 (EQAQQAQQQGQEEQ) shows a compositional bias: low complexity. Residues 597 to 609 (ADFKEVKDDEDKK) are compositionally biased toward basic and acidic residues.

It belongs to the heat shock protein 70 family.

Functionally, acts as a chaperone. The protein is Chaperone protein DnaK of Staphylococcus epidermidis (strain ATCC 35984 / DSM 28319 / BCRC 17069 / CCUG 31568 / BM 3577 / RP62A).